Reading from the N-terminus, the 485-residue chain is Cysteine--tRNA ligase (485 aa).

Position 27 (C27) interacts with Zn(2+). The short motif at 29–39 is the 'HIGH' region element; it reads ITAYDLCHIGH. 3 residues coordinate Zn(2+): C208, H233, and E237. Residues 265–269 carry the 'KMSKS' region motif; it reads KMSKS. K268 provides a ligand contact to ATP.

The protein belongs to the class-I aminoacyl-tRNA synthetase family. As to quaternary structure, monomer. It depends on Zn(2+) as a cofactor.

It localises to the cytoplasm. The catalysed reaction is tRNA(Cys) + L-cysteine + ATP = L-cysteinyl-tRNA(Cys) + AMP + diphosphate. The protein is Cysteine--tRNA ligase of Nitratidesulfovibrio vulgaris (strain ATCC 29579 / DSM 644 / CCUG 34227 / NCIMB 8303 / VKM B-1760 / Hildenborough) (Desulfovibrio vulgaris).